The following is a 246-amino-acid chain: Lipoprotein-releasing system ATP-binding protein LolD 1 (246 aa).

Residues 6-244 form the ABC transporter domain; sequence LKLERIRKDL…ASVTNEAASL (239 aa). 43-50 provides a ligand contact to ATP; it reads GPSGSGKS.

It belongs to the ABC transporter superfamily. Lipoprotein translocase (TC 3.A.1.125) family. In terms of assembly, the complex is composed of two ATP-binding proteins (LolD) and two transmembrane proteins (LolC and LolE).

It localises to the cell inner membrane. Functionally, part of the ABC transporter complex LolCDE involved in the translocation of mature outer membrane-directed lipoproteins, from the inner membrane to the periplasmic chaperone, LolA. Responsible for the formation of the LolA-lipoprotein complex in an ATP-dependent manner. This is Lipoprotein-releasing system ATP-binding protein LolD 1 from Chlorobium chlorochromatii (strain CaD3).